We begin with the raw amino-acid sequence, 432 residues long: MIMELFHTILAIVALILSSAVVSSAEISLASPRKLKLQSLANKGDVRPLQVLKLQEHPGRFITVVQILLNMVAILGGGIGESALSPYIADILNRSFEGSWIAPTASTIAFILVTCLFILFADLIPKRIAITYPEMVALSVVGIMNFSMYVFKPLVWFFDTIANVFFRLFRISTVREDGMTSEDIFAVVEAGAEAGVLKTQEHYLIENIFDMQARTVTSTMTTRENIVYLDRTFSRQEVMDTLSRDSHSKIVICDNGLDKILGYIESHTLLTMYLQNENVVLTDPKLLRKALFVPDTLSLYEVLELFKSTGEDFAIIVNEYALVVGIVTLNDVMSIVMGELVSNEEEYIVSRDENSWLIDGATPLEEVTRVLDIAYFPDEENYETISGFMMYMLRKIPKKTDSVVYGKYKFEVIDTENFKIDQILVSLVKEQE.

The 201-residue stretch at 1 to 201 folds into the CNNM transmembrane domain; the sequence is MIMELFHTIL…AEAGVLKTQE (201 aa). Helical transmembrane passes span 2 to 22, 61 to 81, 100 to 120, and 138 to 158; these read IMEL…SAVV, FITV…GIGE, WIAP…FILF, and LSVV…VWFF. 2 CBS domains span residues 220–279 and 286–345; these read MTTR…NENV and LLRK…SNEE.

The protein belongs to the UPF0053 family. PaeA subfamily.

The protein resides in the cell inner membrane. Functionally, involved in cadaverine and putrescine tolerance in stationary phase. May facilitate the efflux of both cadaverine and putrescine from the cytoplasm, reducing potentially toxic levels under certain stress conditions. The polypeptide is Polyamine export protein (Haemophilus influenzae (strain ATCC 51907 / DSM 11121 / KW20 / Rd)).